Here is a 335-residue protein sequence, read N- to C-terminus: Biotin synthase (335 aa).

The Radical SAM core domain maps to Ala50–Arg279. [4Fe-4S] cluster contacts are provided by Cys65, Cys69, and Cys72. Residues Cys110, Cys142, Cys202, and Arg274 each contribute to the [2Fe-2S] cluster site.

Belongs to the radical SAM superfamily. Biotin synthase family. Homodimer. [4Fe-4S] cluster is required as a cofactor. The cofactor is [2Fe-2S] cluster.

It catalyses the reaction (4R,5S)-dethiobiotin + (sulfur carrier)-SH + 2 reduced [2Fe-2S]-[ferredoxin] + 2 S-adenosyl-L-methionine = (sulfur carrier)-H + biotin + 2 5'-deoxyadenosine + 2 L-methionine + 2 oxidized [2Fe-2S]-[ferredoxin]. It functions in the pathway cofactor biosynthesis; biotin biosynthesis; biotin from 7,8-diaminononanoate: step 2/2. Functionally, catalyzes the conversion of dethiobiotin (DTB) to biotin by the insertion of a sulfur atom into dethiobiotin via a radical-based mechanism. In Methylorubrum extorquens (strain CM4 / NCIMB 13688) (Methylobacterium extorquens), this protein is Biotin synthase.